The primary structure comprises 290 residues: 4-hydroxy-3-methylbut-2-enyl diphosphate reductase (290 aa).

Cys12 contributes to the [4Fe-4S] cluster binding site. (2E)-4-hydroxy-3-methylbut-2-enyl diphosphate-binding residues include His50 and His83. Positions 50 and 83 each coordinate dimethylallyl diphosphate. The isopentenyl diphosphate site is built by His50 and His83. Cys105 provides a ligand contact to [4Fe-4S] cluster. Residue His133 participates in (2E)-4-hydroxy-3-methylbut-2-enyl diphosphate binding. A dimethylallyl diphosphate-binding site is contributed by His133. His133 contacts isopentenyl diphosphate. Glu135 (proton donor) is an active-site residue. Thr173 is a (2E)-4-hydroxy-3-methylbut-2-enyl diphosphate binding site. Cys202 lines the [4Fe-4S] cluster pocket. The (2E)-4-hydroxy-3-methylbut-2-enyl diphosphate site is built by Ser230, Asn232, and Ser274. Residues Ser230, Asn232, and Ser274 each coordinate dimethylallyl diphosphate. Residues Ser230, Asn232, and Ser274 each coordinate isopentenyl diphosphate.

It belongs to the IspH family. The cofactor is [4Fe-4S] cluster.

The enzyme catalyses isopentenyl diphosphate + 2 oxidized [2Fe-2S]-[ferredoxin] + H2O = (2E)-4-hydroxy-3-methylbut-2-enyl diphosphate + 2 reduced [2Fe-2S]-[ferredoxin] + 2 H(+). It catalyses the reaction dimethylallyl diphosphate + 2 oxidized [2Fe-2S]-[ferredoxin] + H2O = (2E)-4-hydroxy-3-methylbut-2-enyl diphosphate + 2 reduced [2Fe-2S]-[ferredoxin] + 2 H(+). Its pathway is isoprenoid biosynthesis; dimethylallyl diphosphate biosynthesis; dimethylallyl diphosphate from (2E)-4-hydroxy-3-methylbutenyl diphosphate: step 1/1. The protein operates within isoprenoid biosynthesis; isopentenyl diphosphate biosynthesis via DXP pathway; isopentenyl diphosphate from 1-deoxy-D-xylulose 5-phosphate: step 6/6. Functionally, catalyzes the conversion of 1-hydroxy-2-methyl-2-(E)-butenyl 4-diphosphate (HMBPP) into a mixture of isopentenyl diphosphate (IPP) and dimethylallyl diphosphate (DMAPP). Acts in the terminal step of the DOXP/MEP pathway for isoprenoid precursor biosynthesis. This chain is 4-hydroxy-3-methylbut-2-enyl diphosphate reductase, found in Nitratidesulfovibrio vulgaris (strain DP4) (Desulfovibrio vulgaris).